Reading from the N-terminus, the 421-residue chain is 2-deoxystreptamine N-acetyl-D-glucosaminyltransferase (421 aa).

It belongs to the glycosyltransferase group 1 family. Glycosyltransferase 4 subfamily.

The catalysed reaction is 2-deoxystreptamine + UDP-N-acetyl-alpha-D-glucosamine = 2'-N-acetylparomamine + UDP + H(+). It participates in antibiotic biosynthesis; neomycin biosynthesis. Glycosyltransferase involved in the biosynthesis of neomycin by mediating conversion of 2-deoxystreptamine (2-DOS) to 2'-N-acetylparomamine using UDP-alpha-D-glucosamine as sugar donor. The chain is 2-deoxystreptamine N-acetyl-D-glucosaminyltransferase (neoD) from Streptomyces fradiae (Streptomyces roseoflavus).